A 587-amino-acid polypeptide reads, in one-letter code: D-lactate dehydrogenase [cytochrome] 1, mitochondrial (587 aa).

Positions 146-327 constitute an FAD-binding PCMH-type domain; that stretch reads SPEQRPRIIL…TEATVKCHVK (182 aa).

This sequence belongs to the FAD-binding oxidoreductase/transferase type 4 family. Requires FAD as cofactor.

It localises to the mitochondrion inner membrane. It carries out the reaction (R)-lactate + 2 Fe(III)-[cytochrome c] = 2 Fe(II)-[cytochrome c] + pyruvate + 2 H(+). Its function is as follows. Catalyzes the stereospecific oxidation of D-lactate to pyruvate. This Saccharomyces cerevisiae (strain ATCC 204508 / S288c) (Baker's yeast) protein is D-lactate dehydrogenase [cytochrome] 1, mitochondrial.